The primary structure comprises 331 residues: Holliday junction branch migration complex subunit RuvB (331 aa).

The large ATPase domain (RuvB-L) stretch occupies residues 1 to 186; it reads MAKTMMQDRL…FGIVQRLEFY (186 aa). ATP is bound by residues Ile25, Arg26, Gly67, Lys70, Thr71, Thr72, 133–135, Arg176, Tyr186, and Arg223; that span reads EDF. Mg(2+) is bound at residue Thr71. Residues 187–257 form a small ATPAse domain (RuvB-S) region; sequence NIADLTTIVS…IAGSALDMLA (71 aa). The segment at 260–331 is head domain (RuvB-H); sequence RRGLDHLDRR…LTQMAIDQML (72 aa). DNA contacts are provided by Arg296, Arg315, and Arg320.

Belongs to the RuvB family. Homohexamer. Forms an RuvA(8)-RuvB(12)-Holliday junction (HJ) complex. HJ DNA is sandwiched between 2 RuvA tetramers; dsDNA enters through RuvA and exits via RuvB. An RuvB hexamer assembles on each DNA strand where it exits the tetramer. Each RuvB hexamer is contacted by two RuvA subunits (via domain III) on 2 adjacent RuvB subunits; this complex drives branch migration. In the full resolvosome a probable DNA-RuvA(4)-RuvB(12)-RuvC(2) complex forms which resolves the HJ.

Its subcellular location is the cytoplasm. It catalyses the reaction ATP + H2O = ADP + phosphate + H(+). Its function is as follows. The RuvA-RuvB-RuvC complex processes Holliday junction (HJ) DNA during genetic recombination and DNA repair, while the RuvA-RuvB complex plays an important role in the rescue of blocked DNA replication forks via replication fork reversal (RFR). RuvA specifically binds to HJ cruciform DNA, conferring on it an open structure. The RuvB hexamer acts as an ATP-dependent pump, pulling dsDNA into and through the RuvAB complex. RuvB forms 2 homohexamers on either side of HJ DNA bound by 1 or 2 RuvA tetramers; 4 subunits per hexamer contact DNA at a time. Coordinated motions by a converter formed by DNA-disengaged RuvB subunits stimulates ATP hydrolysis and nucleotide exchange. Immobilization of the converter enables RuvB to convert the ATP-contained energy into a lever motion, pulling 2 nucleotides of DNA out of the RuvA tetramer per ATP hydrolyzed, thus driving DNA branch migration. The RuvB motors rotate together with the DNA substrate, which together with the progressing nucleotide cycle form the mechanistic basis for DNA recombination by continuous HJ branch migration. Branch migration allows RuvC to scan DNA until it finds its consensus sequence, where it cleaves and resolves cruciform DNA. This is Holliday junction branch migration complex subunit RuvB from Psychrobacter cryohalolentis (strain ATCC BAA-1226 / DSM 17306 / VKM B-2378 / K5).